We begin with the raw amino-acid sequence, 173 residues long: Large ribosomal subunit protein uL16 (173 aa).

This sequence belongs to the universal ribosomal protein uL16 family.

In Methanococcus maripaludis (strain DSM 14266 / JCM 13030 / NBRC 101832 / S2 / LL), this protein is Large ribosomal subunit protein uL16.